A 629-amino-acid chain; its full sequence is D-proline reductase proprotein PrdA (629 aa).

The active-site Covalent intermediate with substrate; via pyruvic acid is the cysteine 425. Cysteine 425 is modified (pyruvic acid (Cys)).

In terms of assembly, consists of 3 subunits of 23, 26 and 45 kDa (alpha, gamma and beta respectively). The molecular weight of the complex is approximately 870 kDa, suggesting a decameric structure, if all 3 subunits are present in equal stoichiometry. The peptide chain is cleaved into beta and alpha chains, and the alpha chain N-terminal cysteine is deaminated and oxidized to form a reactive pyruvoyl group.

The protein localises to the cytoplasm. The enzyme catalyses [PrdC protein]-Se-L-selenocysteinyl-S-L-cysteine + 5-aminopentanoate = [PrdC protein]-L-selenocysteine/L-cysteine + D-proline. Its function is as follows. D-proline reductase catalyzes the reductive cleavage of a C-N bond in D-proline resulting in the formation of 5-aminovalerate. The alpha subunit has been shown to bind D-proline, presumably via the pyruvoyl group. The chain is D-proline reductase proprotein PrdA (prdA) from Acetoanaerobium sticklandii (strain ATCC 12662 / DSM 519 / JCM 1433 / CCUG 9281 / NCIMB 10654 / HF) (Clostridium sticklandii).